The following is a 380-amino-acid chain: Magnesium-protoporphyrin IX monomethyl ester [oxidative] cyclase 1 (380 aa).

This sequence belongs to the AcsF family. The cofactor is Fe cation.

The catalysed reaction is Mg-protoporphyrin IX 13-monomethyl ester + 3 NADPH + 3 O2 + 2 H(+) = 3,8-divinyl protochlorophyllide a + 3 NADP(+) + 5 H2O. The protein operates within porphyrin-containing compound metabolism; chlorophyll biosynthesis (light-independent). Functionally, catalyzes the formation of the isocyclic ring in chlorophyll biosynthesis. Mediates the cyclase reaction, which results in the formation of divinylprotochlorophyllide (Pchlide) characteristic of all chlorophylls from magnesium-protoporphyrin IX 13-monomethyl ester (MgPMME). The chain is Magnesium-protoporphyrin IX monomethyl ester [oxidative] cyclase 1 from Thermosynechococcus vestitus (strain NIES-2133 / IAM M-273 / BP-1).